Reading from the N-terminus, the 72-residue chain is UPF0154 protein YneF (72 aa).

A helical transmembrane segment spans residues 4–24; that stretch reads WVGILVGVVALLIGVALGFFI.

This sequence belongs to the UPF0154 family.

It localises to the membrane. In Bacillus subtilis (strain 168), this protein is UPF0154 protein YneF (yneF).